Consider the following 301-residue polypeptide: NTE family protein RssA (301 aa).

Residues 8 to 168 (LALGSGAARG…VNPIPISLTR (161 aa)) form the PNPLA domain. Positions 39 to 43 (GCSIG) match the GXSXG motif. The active-site Nucleophile is the serine 41. Aspartate 155 serves as the catalytic Proton acceptor. Residues 155–157 (DGA) carry the DGA/G motif.

The protein belongs to the NTE family.

In Escherichia coli (strain K12), this protein is NTE family protein RssA (rssA).